The primary structure comprises 462 residues: Glutamate--tRNA ligase 2 (462 aa).

Positions 8–18 match the 'HIGH' region motif; the sequence is PSPTGYLHIGG. Residues 236–240 carry the 'KMSKS' region motif; sequence KLSKR. Residue K239 coordinates ATP.

The protein belongs to the class-I aminoacyl-tRNA synthetase family. Glutamate--tRNA ligase type 1 subfamily. In terms of assembly, monomer.

Its subcellular location is the cytoplasm. The catalysed reaction is tRNA(Glu) + L-glutamate + ATP = L-glutamyl-tRNA(Glu) + AMP + diphosphate. Functionally, catalyzes the attachment of glutamate to tRNA(Glu) in a two-step reaction: glutamate is first activated by ATP to form Glu-AMP and then transferred to the acceptor end of tRNA(Glu). The sequence is that of Glutamate--tRNA ligase 2 from Nitratiruptor sp. (strain SB155-2).